Consider the following 208-residue polypeptide: Large ribosomal subunit protein uL4 (208 aa).

The disordered stretch occupies residues 46–97 (QGTHKTKTRAEVRGGGKKPYRQKGTGNARQGSSRSPIMVGGGTIFGPQPRSY). The segment covering 69–80 (GTGNARQGSSRS) has biased composition (polar residues).

Belongs to the universal ribosomal protein uL4 family. As to quaternary structure, part of the 50S ribosomal subunit.

Its function is as follows. One of the primary rRNA binding proteins, this protein initially binds near the 5'-end of the 23S rRNA. It is important during the early stages of 50S assembly. It makes multiple contacts with different domains of the 23S rRNA in the assembled 50S subunit and ribosome. Forms part of the polypeptide exit tunnel. This Chlorobaculum parvum (strain DSM 263 / NCIMB 8327) (Chlorobium vibrioforme subsp. thiosulfatophilum) protein is Large ribosomal subunit protein uL4.